The sequence spans 274 residues: 3-methyl-2-oxobutanoate hydroxymethyltransferase (274 aa).

Residues Asp-49 and Asp-88 each contribute to the Mg(2+) site. 3-methyl-2-oxobutanoate-binding positions include 49 to 50 (DS), Asp-88, and Lys-118. Glu-120 lines the Mg(2+) pocket. Catalysis depends on Glu-187, which acts as the Proton acceptor.

It belongs to the PanB family. In terms of assembly, homodecamer; pentamer of dimers. Requires Mg(2+) as cofactor.

It localises to the cytoplasm. It carries out the reaction 3-methyl-2-oxobutanoate + (6R)-5,10-methylene-5,6,7,8-tetrahydrofolate + H2O = 2-dehydropantoate + (6S)-5,6,7,8-tetrahydrofolate. It functions in the pathway cofactor biosynthesis; (R)-pantothenate biosynthesis; (R)-pantoate from 3-methyl-2-oxobutanoate: step 1/2. Its function is as follows. Catalyzes the reversible reaction in which hydroxymethyl group from 5,10-methylenetetrahydrofolate is transferred onto alpha-ketoisovalerate to form ketopantoate. The sequence is that of 3-methyl-2-oxobutanoate hydroxymethyltransferase from Allorhizobium ampelinum (strain ATCC BAA-846 / DSM 112012 / S4) (Agrobacterium vitis (strain S4)).